A 665-amino-acid chain; its full sequence is MDKKEVQHHRSQQAMTKSLYAIGMGLLGKSATNMDCANTNLESAGKSSSTNYNRNRFYNERFVPMASGTMPSVSGTNHHSRHQQLLLQQAPKCTADLNEKLVKINRQNANKELSTIQAKDMQSVDKNEEALKELQESIPEINKIFDVHCRIGSGTFSTVLLGTLQRERGLVETQRRRFAIKHHNPTNHPERILRELECMYRIGGVENVIGINCCIRYNDNVAFIMPYMTHDRFHDIYRSLNFPEIRDYLRNLLIALRHVHKFNVIHRDVKPSNILYNRRTGKFLLCDFGLAQRIADDGSVVQSSDLSSREVFSILRDLENGRSVTLTDGNSAQAEAEDYMARRRMRALGGGGSVERAVTGPPSIQKLREQAGGHLTKKDVANQRADTMRLLNRLRLVSPNADPNNYVVSTNTSKKEMHASRAGTPGYRPPEVLLRYPKQSTAVDVWAAGVIMLSLLSGLHPFFKAPHDCGALAEIINLFGDMPVRKTAFLLDRLILLAQKVNTLDLRRVCMRFRHADFFLAPEIQRKYQRPDGTTEMCRSCEQPTFNCLCSNSGHNLERYDGLDIFPAVAYDLLSRLLEVNPQKRITAEEALKHPFFSDQHRITPGIPLHQQQLIMHQQQHIMQHQQHLQRSRETLPSSAARTLKAFVCYPMEITSTASQAAGNI.

The region spanning 145–597 (FDVHCRIGSG…AEEALKHPFF (453 aa)) is the Protein kinase domain. ATP-binding positions include 151–159 (IGSGTFSTV) and lysine 181. Residue aspartate 268 is the Proton acceptor of the active site.

The protein belongs to the protein kinase superfamily. Ser/Thr protein kinase family. As to quaternary structure, interacts with chif (via N-terminus).

It catalyses the reaction L-seryl-[protein] + ATP = O-phospho-L-seryl-[protein] + ADP + H(+). The enzyme catalyses L-threonyl-[protein] + ATP = O-phospho-L-threonyl-[protein] + ADP + H(+). Probable serine/threonine protein kinase that forms a complex with the N-terminal peptide of the chiffon protein and may be involved in regulating meiotic processes in the male testis. The protein is non-specific serine/threonine protein kinase of Drosophila melanogaster (Fruit fly).